The primary structure comprises 351 residues: Porphobilinogen deaminase (351 aa).

C242 is subject to S-(dipyrrolylmethanemethyl)cysteine.

The protein belongs to the HMBS family. In terms of assembly, monomer. The cofactor is dipyrromethane.

It catalyses the reaction 4 porphobilinogen + H2O = hydroxymethylbilane + 4 NH4(+). Its pathway is porphyrin-containing compound metabolism; protoporphyrin-IX biosynthesis; coproporphyrinogen-III from 5-aminolevulinate: step 2/4. In terms of biological role, tetrapolymerization of the monopyrrole PBG into the hydroxymethylbilane pre-uroporphyrinogen in several discrete steps. This is Porphobilinogen deaminase from Rickettsia peacockii (strain Rustic).